The following is a 366-amino-acid chain: Phospho-N-acetylmuramoyl-pentapeptide-transferase (366 aa).

10 consecutive transmembrane segments (helical) span residues 3-23, 55-75, 80-100, 118-138, 161-181, 197-217, 238-258, 262-282, 290-310, and 341-361; these read QIII…PILI, IAII…SYFA, FTAS…TGFA, AKLI…LRFP, IAFG…YVVV, LAAG…FWQF, IAVL…WNAA, IFMG…ISVV, VIIG…IAVF, and FWLI…GDWL.

This sequence belongs to the glycosyltransferase 4 family. MraY subfamily. Requires Mg(2+) as cofactor.

It localises to the cell membrane. The enzyme catalyses UDP-N-acetyl-alpha-D-muramoyl-L-alanyl-gamma-D-glutamyl-meso-2,6-diaminopimeloyl-D-alanyl-D-alanine + di-trans,octa-cis-undecaprenyl phosphate = di-trans,octa-cis-undecaprenyl diphospho-N-acetyl-alpha-D-muramoyl-L-alanyl-D-glutamyl-meso-2,6-diaminopimeloyl-D-alanyl-D-alanine + UMP. It participates in cell wall biogenesis; peptidoglycan biosynthesis. In terms of biological role, catalyzes the initial step of the lipid cycle reactions in the biosynthesis of the cell wall peptidoglycan: transfers peptidoglycan precursor phospho-MurNAc-pentapeptide from UDP-MurNAc-pentapeptide onto the lipid carrier undecaprenyl phosphate, yielding undecaprenyl-pyrophosphoryl-MurNAc-pentapeptide, known as lipid I. The sequence is that of Phospho-N-acetylmuramoyl-pentapeptide-transferase from Corynebacterium efficiens (strain DSM 44549 / YS-314 / AJ 12310 / JCM 11189 / NBRC 100395).